A 309-amino-acid chain; its full sequence is Cytidine deaminase (309 aa).

2 CMP/dCMP-type deaminase domains span residues 48-168 (DEDA…FGPR) and 200-309 (DDND…SLSL). 89–91 (NME) is a binding site for substrate. Residue H102 coordinates Zn(2+). Residue E104 is the Proton donor of the active site. Zn(2+) is bound by residues C129 and C132.

Belongs to the cytidine and deoxycytidylate deaminase family. Homodimer. Requires Zn(2+) as cofactor.

The enzyme catalyses cytidine + H2O + H(+) = uridine + NH4(+). It catalyses the reaction 2'-deoxycytidine + H2O + H(+) = 2'-deoxyuridine + NH4(+). This enzyme scavenges exogenous and endogenous cytidine and 2'-deoxycytidine for UMP synthesis. This Sodalis glossinidius (strain morsitans) protein is Cytidine deaminase.